A 517-amino-acid polypeptide reads, in one-letter code: 2-isopropylmalate synthase (517 aa).

Residues 7-269 (VIIFDTTLRD…ETGIDTTQIV (263 aa)) enclose the Pyruvate carboxyltransferase domain. Mn(2+) contacts are provided by D16, H204, H206, and N240. The tract at residues 395–517 (KFISQKISTE…KPKAQGSGTI (123 aa)) is regulatory domain.

The protein belongs to the alpha-IPM synthase/homocitrate synthase family. LeuA type 1 subfamily. As to quaternary structure, homodimer. It depends on Mn(2+) as a cofactor.

The protein resides in the cytoplasm. The enzyme catalyses 3-methyl-2-oxobutanoate + acetyl-CoA + H2O = (2S)-2-isopropylmalate + CoA + H(+). It functions in the pathway amino-acid biosynthesis; L-leucine biosynthesis; L-leucine from 3-methyl-2-oxobutanoate: step 1/4. Functionally, catalyzes the condensation of the acetyl group of acetyl-CoA with 3-methyl-2-oxobutanoate (2-ketoisovalerate) to form 3-carboxy-3-hydroxy-4-methylpentanoate (2-isopropylmalate). This Neisseria meningitidis serogroup A / serotype 4A (strain DSM 15465 / Z2491) protein is 2-isopropylmalate synthase.